A 1205-amino-acid chain; its full sequence is Transcriptional-regulating factor 1 (1205 aa).

6 disordered regions span residues 201-226 (YQQV…VGQH), 270-317 (YPQP…QRQS), 332-351 (QHLQ…SYHR), 390-500 (PQSH…QTKG), 527-583 (LNGH…PEAE), and 601-629 (PKPS…MSDD). 2 stretches are compositionally biased toward low complexity: residues 291–317 (QQQQ…QRQS) and 332–342 (QHLQEQQQPSM). 3 stretches are compositionally biased toward polar residues: residues 406-417 (KTYSSDRQTPAM), 437-447 (SEMTRVTSTLP), and 487-498 (QSGSPESSSGQT). Residue serine 490 is modified to Phosphoserine. A C2H2-type 1 zinc finger spans residues 512–534 (LTCSICLKEFKSLPALNGHMRSH). Over residues 551-579 (APPPQPQPQPQPQQPLPPPPPPPPPPQLP) the composition is skewed to pro residues. Polar residues predominate over residues 604-613 (SSQGFTNSVA). An N6-acetyllysine mark is found at lysine 639 and lysine 646. The residue at position 773 (threonine 773) is a Phosphothreonine. Residues 785–876 (PRINIGLRFQ…ATLEMLLLRK (92 aa)) form the ELM2 domain. Residues 891–942 (AGSDKWTSLERKLFNKALATYSKDFIFVQKMVKSKTVAQCVEYYYTWKKIMR) enclose the SANT domain. Positions 956–975 (DDCMTSEEEEEAEEEEEDPE) are enriched in acidic residues. Disordered stretches follow at residues 956-1016 (DDCM…QQPS) and 1043-1087 (HGGT…GETD). Threonine 960 carries the phosphothreonine modification. Serine 961 is subject to Phosphoserine. A compositionally biased stretch (basic and acidic residues) spans 976 to 990 (EDRKSIKEEESEVAK). Residues 1019–1043 (FICEMPNCGAVFSSRQALNGHARIH) form a C2H2-type 2 zinc finger. Residues 1072–1086 (SVKSSPSHSTTSGET) are compositionally biased toward low complexity. The segment at 1092-1114 (FPCKECGKVFFKIKSRNAHMKTH) adopts a C2H2-type 3 zinc-finger fold.

In terms of assembly, interacts with CREBBP and EP300. Interacts with DNTTIP1 and DNTT. In terms of tissue distribution, highly expressed in kidney, lung and brain. In the brain, expression was seen in the basal ganglia, hippocampus, piriform cortex, cerebral cortex, ventromedial nucleus of the hypothalamus and the dorsal and superior central nuclei of the raphe.

The protein localises to the nucleus. Its function is as follows. Binds DNA and activates transcription of CYP11A1. Interaction with CREBBP and EP300 results in a synergistic transcriptional activation of CYP11A1. The polypeptide is Transcriptional-regulating factor 1 (Trerf1) (Mus musculus (Mouse)).